The primary structure comprises 265 residues: Catechol O-methyltransferase (265 aa).

The Cytoplasmic portion of the chain corresponds to 1–2 (ML). Residues 3-19 (LAAVSLGLLLLAFLLLL) form a helical; Signal-anchor for type II membrane protein membrane-spanning segment. The Extracellular segment spans residues 20–265 (RHLGWGLVAI…QGPGSSPVKS (246 aa)). Residues Val-85, Glu-107, Ser-115, Glu-133, Ile-134, 160-163 (GASQ), Ser-162, and Asp-184 contribute to the S-adenosyl-L-methionine site. Asp-184 serves as a coordination point for Mg(2+). Position 187 (Lys-187) interacts with substrate. The Mg(2+) site is built by Asp-212 and Asn-213. Substrate-binding residues include Asn-213 and Glu-242. Phosphoserine is present on residues Ser-260, Ser-261, and Ser-265.

It belongs to the class I-like SAM-binding methyltransferase superfamily. Cation-dependent O-methyltransferase family. Mg(2+) serves as cofactor.

It is found in the cytoplasm. It localises to the cell membrane. It catalyses the reaction a catechol + S-adenosyl-L-methionine = a guaiacol + S-adenosyl-L-homocysteine + H(+). It carries out the reaction 2-hydroxyestrone + S-adenosyl-L-methionine = 2-hydroxy-3-methoxy-estrone + S-adenosyl-L-homocysteine + H(+). The enzyme catalyses 4-hydroxyestrone + S-adenosyl-L-methionine = 4-methoxyestrone + S-adenosyl-L-homocysteine + H(+). The catalysed reaction is 2-hydroxyestrone + S-adenosyl-L-methionine = 2-methoxyestrone + S-adenosyl-L-homocysteine + H(+). It catalyses the reaction 4-hydroxy-17beta-estradiol + S-adenosyl-L-methionine = 4-methoxy-17beta-estradiol + S-adenosyl-L-homocysteine + H(+). It carries out the reaction 2-hydroxy-17beta-estradiol + S-adenosyl-L-methionine = 2-hydroxy-3-methoxy-17beta-estradiol + S-adenosyl-L-homocysteine + H(+). The enzyme catalyses 2-hydroxy-17beta-estradiol + S-adenosyl-L-methionine = 2-methoxy-17beta-estradiol + S-adenosyl-L-homocysteine + H(+). Its function is as follows. Catalyzes the O-methylation, and thereby the inactivation, of catecholamine neurotransmitters and catechol hormones. Also shortens the biological half-lives of certain neuroactive drugs, like L-DOPA, alpha-methyl DOPA and isoproterenol. This is Catechol O-methyltransferase from Mus musculus (Mouse).